We begin with the raw amino-acid sequence, 504 residues long: Plasma protease C1 inhibitor (504 aa).

A signal peptide spans 1 to 22 (MASRLTPLTLLLLLLAGDRAFS). The segment at 22 to 67 (SDPEATSHSTQDPLEAQAKSRESFPERDDSWSPPEPTVLPSTWPTT) is disordered. Positions 39–51 (AKSRESFPERDDS) are enriched in basic and acidic residues. 3 N-linked (GlcNAc...) asparagine glycosylation sites follow: Asn75, Asn83, and Asn107. Over residues 85–124 (SFSQHSQPAAQLPTDSPGQPPLNSSSQPSTASDLPTQATT) the composition is skewed to polar residues. The interval 85–141 (SFSQHSQPAAQLPTDSPGQPPLNSSSQPSTASDLPTQATTEPFCPEPLAQCSDSDRD) is disordered. Cystine bridges form between Cys128/Cys432 and Cys135/Cys210. N-linked (GlcNAc...) asparagine glycosylation is found at Asn243 and Asn356.

The protein belongs to the serpin family. As to quaternary structure, interacts with MASP1.

Its subcellular location is the secreted. Serine protease inhibitor, which acrs as a regulator of the classical complement pathway. Forms a proteolytically inactive stoichiometric complex with the C1r or C1s proteases. May also regulate blood coagulation, fibrinolysis and the generation of kinins. Very efficient inhibitor of FXIIa. Inhibits chymotrypsin and kallikrein. In Mus musculus (Mouse), this protein is Plasma protease C1 inhibitor (Serping1).